The sequence spans 578 residues: A-type ATP synthase subunit A (578 aa).

Position 228-235 (228-235 (GPFGSGKT)) interacts with ATP.

It belongs to the ATPase alpha/beta chains family. Has multiple subunits with at least A(3), B(3), C, D, E, F, G, I and proteolipid K(x).

It localises to the cell membrane. It carries out the reaction ATP + H2O + 4 H(+)(in) = ADP + phosphate + 5 H(+)(out). Its activity is regulated as follows. ATP hydrolysis stimulated by sulfite, ethanol, glycerol, magnesium and zinc ions, inhibited by diethylstilbestrol (DES) and less well by N,N-dicyclohexylcarbodiimide (DCCD). Functionally, component of the A-type ATP synthase that produces ATP from ADP in the presence of a proton gradient across the membrane. The A chain is the catalytic subunit. This is A-type ATP synthase subunit A from Methanosarcina mazei (strain ATCC BAA-159 / DSM 3647 / Goe1 / Go1 / JCM 11833 / OCM 88) (Methanosarcina frisia).